A 246-amino-acid chain; its full sequence is Ribosomal RNA small subunit methyltransferase J (246 aa).

S-adenosyl-L-methionine is bound by residues 115–116 (ER) and D169.

It belongs to the methyltransferase superfamily. RsmJ family.

The protein localises to the cytoplasm. The catalysed reaction is guanosine(1516) in 16S rRNA + S-adenosyl-L-methionine = N(2)-methylguanosine(1516) in 16S rRNA + S-adenosyl-L-homocysteine + H(+). Specifically methylates the guanosine in position 1516 of 16S rRNA. The polypeptide is Ribosomal RNA small subunit methyltransferase J (Buchnera aphidicola subsp. Acyrthosiphon pisum (strain 5A)).